Here is a 164-residue protein sequence, read N- to C-terminus: R-phycoerythrin alpha chain (164 aa).

(2R,3E)-phycoerythrobilin is bound by residues N47, K81, C82, R84, H88, R137, C139, and R142.

It belongs to the phycobiliprotein family. In terms of assembly, heterododecamer of 6 alpha and 6 beta chains. The basic functional unit of phycobiliproteins is a ring-shaped hexamer formed from two back-to-back trimers contacting via the alpha chain subunits. The trimers are composed of alpha/beta subunit heterodimers arranged around a three-fold axis of symmetry. The phycoerythrins also contain a gamma subunit which is located in the center of the hexamer. Contains two covalently linked phycoerythrobilin chromophores. In PubMed:8876649 the authors refer to the bilins as phycoerythrobilins. In the PDB entries, the bilins are named as phycocyanobilins although the modeled compounds correspond to phycoerythrobilins.

It localises to the plastid. The protein resides in the chloroplast thylakoid membrane. In terms of biological role, light-harvesting photosynthetic tetrapyrrole chromophore-protein from the phycobiliprotein complex. The chain is R-phycoerythrin alpha chain (cpeA) from Polysiphonia urceolata (Red alga).